Here is a 290-residue protein sequence, read N- to C-terminus: 33 kDa chaperonin (290 aa).

Intrachain disulfides connect Cys235-Cys237 and Cys268-Cys271.

Belongs to the HSP33 family. Post-translationally, under oxidizing conditions two disulfide bonds are formed involving the reactive cysteines. Under reducing conditions zinc is bound to the reactive cysteines and the protein is inactive.

It localises to the cytoplasm. In terms of biological role, redox regulated molecular chaperone. Protects both thermally unfolding and oxidatively damaged proteins from irreversible aggregation. Plays an important role in the bacterial defense system toward oxidative stress. The protein is 33 kDa chaperonin of Streptococcus pyogenes serotype M49.